The chain runs to 395 residues: [LysW]-aminoadipate semialdehyde transaminase (395 aa).

Pyridoxal 5'-phosphate is bound by residues glycine 113–threonine 114 and phenylalanine 140. Substrate is bound at residue arginine 143. Aspartate 225–glutamine 228 is a binding site for pyridoxal 5'-phosphate. Lysine 254 is modified (N6-(pyridoxal phosphate)lysine). Threonine 282 serves as a coordination point for substrate. Threonine 283 provides a ligand contact to pyridoxal 5'-phosphate.

This sequence belongs to the class-III pyridoxal-phosphate-dependent aminotransferase family. LysJ subfamily. In terms of assembly, homodimer. Pyridoxal 5'-phosphate is required as a cofactor.

The protein localises to the cytoplasm. It catalyses the reaction [amino-group carrier protein]-C-terminal-gamma-(L-lysyl)-L-glutamate + 2-oxoglutarate = [amino-group carrier protein]-C-terminal-N-(1-carboxy-5-oxopentan-1-yl)-L-glutamine + L-glutamate. Its pathway is amino-acid biosynthesis; L-lysine biosynthesis via AAA pathway; L-lysine from L-alpha-aminoadipate (Thermus route): step 4/5. Functionally, catalyzes the transfer of the amino group of L-glutamate to [LysW]-aminoadipate 6-semialdehyde, generating [LysW]-gamma-L-lysine. The sequence is that of [LysW]-aminoadipate semialdehyde transaminase from Thermus thermophilus (strain ATCC 27634 / DSM 579 / HB8).